The sequence spans 197 residues: Large ribosomal subunit protein bL25 (197 aa).

It belongs to the bacterial ribosomal protein bL25 family. CTC subfamily. In terms of assembly, part of the 50S ribosomal subunit; part of the 5S rRNA/L5/L18/L25 subcomplex. Contacts the 5S rRNA. Binds to the 5S rRNA independently of L5 and L18.

Functionally, this is one of the proteins that binds to the 5S RNA in the ribosome where it forms part of the central protuberance. This Lawsonia intracellularis (strain PHE/MN1-00) protein is Large ribosomal subunit protein bL25.